Reading from the N-terminus, the 676-residue chain is Nicastrin (676 aa).

The N-terminal stretch at 1 to 28 (MAMGLIRLLSIAFTLVLLSILPLHLSLA) is a signal peptide. At 29 to 644 (DEITSIESVP…VYTVQHSAYD (616 aa)) the chain is on the extracellular side. Asparagine 58, asparagine 336, asparagine 371, asparagine 444, asparagine 480, asparagine 555, and asparagine 611 each carry an N-linked (GlcNAc...) asparagine glycan. The chain crosses the membrane as a helical span at residues 645-665 (NAVLVAGITVTTLAYIGILAA). Residues 666–676 (KSIITKALKQD) lie on the Cytoplasmic side of the membrane.

The protein belongs to the nicastrin family. In terms of assembly, probable component of the gamma-secretase complex, a complex composed of a presenilin homodimer, nicastrin, APH1 and PEN2.

Its subcellular location is the membrane. In terms of biological role, probable subunit of the gamma-secretase complex, an endoprotease complex that catalyzes the intramembrane cleavage of integral membrane proteins such as Notch. This is Nicastrin from Arabidopsis thaliana (Mouse-ear cress).